We begin with the raw amino-acid sequence, 283 residues long: 4-diphosphocytidyl-2-C-methyl-D-erythritol kinase (283 aa).

Lys13 is a catalytic residue. An ATP-binding site is contributed by 96–106 (PMGGGIGGGSS). Residue Asp138 is part of the active site.

It belongs to the GHMP kinase family. IspE subfamily.

It carries out the reaction 4-CDP-2-C-methyl-D-erythritol + ATP = 4-CDP-2-C-methyl-D-erythritol 2-phosphate + ADP + H(+). It functions in the pathway isoprenoid biosynthesis; isopentenyl diphosphate biosynthesis via DXP pathway; isopentenyl diphosphate from 1-deoxy-D-xylulose 5-phosphate: step 3/6. Catalyzes the phosphorylation of the position 2 hydroxy group of 4-diphosphocytidyl-2C-methyl-D-erythritol. This Pseudomonas fluorescens (strain SBW25) protein is 4-diphosphocytidyl-2-C-methyl-D-erythritol kinase.